A 132-amino-acid chain; its full sequence is Glycine cleavage system H protein (132 aa).

The Lipoyl-binding domain maps to 24-106; the sequence is TVRVGITDFA…YGAGWLLDVQ (83 aa). N6-lipoyllysine is present on K65.

This sequence belongs to the GcvH family. The glycine cleavage system is composed of four proteins: P, T, L and H. The cofactor is (R)-lipoate.

The glycine cleavage system catalyzes the degradation of glycine. The H protein shuttles the methylamine group of glycine from the P protein to the T protein. The protein is Glycine cleavage system H protein of Mycobacterium avium (strain 104).